The chain runs to 119 residues: Large ribosomal subunit protein bL20c (119 aa).

It belongs to the bacterial ribosomal protein bL20 family.

The protein resides in the plastid. It localises to the chloroplast. In terms of biological role, binds directly to 23S ribosomal RNA and is necessary for the in vitro assembly process of the 50S ribosomal subunit. It is not involved in the protein synthesizing functions of that subunit. The chain is Large ribosomal subunit protein bL20c from Saccharum officinarum (Sugarcane).